Here is a 415-residue protein sequence, read N- to C-terminus: Ammonium transporter Rh type A (415 aa).

Over 1-2 (MR) the chain is Cytoplasmic. The helical transmembrane segment at 3–23 (FIFPTIAVLLEASMIVLFGFF) threads the bilayer. The Extracellular segment spans residues 24 to 51 (VKYETEQNAIQQPNSTNSTKVDRSLELY). Residues N37 and N40 are each glycosylated (N-linked (GlcNAc...) asparagine). A helical membrane pass occupies residues 52–72 (PLFQDVHVMIFVGFGFLMTFL). The Cytoplasmic portion of the chain corresponds to 73–76 (KKYG). A helical membrane pass occupies residues 77–97 (FSSVGINLLIAALGLQWGTFV). Residues 98-115 (QGMVHRHGQTIYIGIKNM) are Extracellular-facing. Residues 116–136 (INADFSTATVLISFGAVLGKI) form a helical membrane-spanning segment. The Cytoplasmic segment spans residues 137 to 142 (SPTQML). Residues 143–163 (IMTIIEITVFAGNEYVVGEIF) form a helical membrane-spanning segment. Residues 164–167 (QASD) lie on the Extracellular side of the membrane. A helical transmembrane segment spans residues 168–188 (IGASMTIHAFGAYFGLAVAGV). At 189 to 208 (LYRTGLRKGHEKEESEYHSD) the chain is on the cytoplasmic side. Residues 209-229 (LFAMIGTLFLWMFWPSFNSAI) form a helical membrane-spanning segment. At 230–236 (AETAEEQ) the chain is on the extracellular side. The helical transmembrane segment at 237–257 (YLAIINTYLSLVACVLTAYAM) threads the bilayer. Topologically, residues 258–268 (SSLVGHRGKLD) are cytoplasmic. Residues 269–287 (MVHIQNATLAGGVAVGTCA) form a helical membrane-spanning segment. Residues 288–290 (DMK) lie on the Extracellular side of the membrane. A helical membrane pass occupies residues 291 to 311 (IHPYGSLIIGSIAGMVSVLGF). Residues 312–332 (RFLTPCLTAKLRIHDTCGVHN) are Cytoplasmic-facing. The helical transmembrane segment at 333–353 (LHGLPGVVGGLSSIVAILLGV) threads the bilayer. The Extracellular portion of the chain corresponds to 354-363 (STASSMTMQA). Residues 364–384 (AALGSSIGSAIAGGLITGLIL) form a helical membrane-spanning segment. Topologically, residues 385-415 (RFIVRGQPSKDNFFDDSVYWEVPKEKELDNV) are cytoplasmic.

Belongs to the ammonium transporter (TC 2.A.49) family. Rh subfamily. Homodimer. Heterotrimer; a RHCE monomer interacts with a RHAG homodimer. Component of the ankyrin-1 complex in the erythrocyte, composed of ANK1, RHCE, RHAG, SLC4A1, EPB42, GYPA, GYPB and AQP1. Interacts with GYPB (via the N-terminal); this interaction bridges the (RHAG)2(RHCE) heterotrimer with the SLC4A1 Band 3 I dimer complexed with GYPA. In terms of processing, glycosylated.

The protein localises to the membrane. It carries out the reaction methylamine(out) = methylamine(in). The catalysed reaction is NH4(+)(in) = NH4(+)(out). The enzyme catalyses CO2(out) = CO2(in). Functionally, component of the ankyrin-1 complex, a multiprotein complex involved in the stability and shape of the erythrocyte membrane. Heterotrimer with RHCE (RHAG)2(RHCE), that transports ammonium and its related derivative methylammonium, in both neutral and ionic forms, across the erythrocyte membrane. The transport of NH4(+) is electrogenic and masks the NH3 transport. Also, may act as a CO2 channel. Moreover in erythrocyte, regulates RHD membrane expression and is associated with rhesus blood group antigen expression. This Canis lupus familiaris (Dog) protein is Ammonium transporter Rh type A.